A 248-amino-acid polypeptide reads, in one-letter code: 2,3-bisphosphoglycerate-dependent phosphoglycerate mutase (248 aa).

Residues Arg8 to Asn15, Thr21 to Gly22, Arg60, Glu87 to Tyr90, Lys98, Arg114 to Arg115, and Gly183 to Asn184 contribute to the substrate site. His9 serves as the catalytic Tele-phosphohistidine intermediate. The active-site Proton donor/acceptor is the Glu87.

This sequence belongs to the phosphoglycerate mutase family. BPG-dependent PGAM subfamily. As to quaternary structure, homodimer.

The catalysed reaction is (2R)-2-phosphoglycerate = (2R)-3-phosphoglycerate. It functions in the pathway carbohydrate degradation; glycolysis; pyruvate from D-glyceraldehyde 3-phosphate: step 3/5. Catalyzes the interconversion of 2-phosphoglycerate and 3-phosphoglycerate. The chain is 2,3-bisphosphoglycerate-dependent phosphoglycerate mutase from Teredinibacter turnerae (strain ATCC 39867 / T7901).